The sequence spans 78 residues: uncharacterized protein (78 aa).

Residues Gly51–Asn78 are disordered.

This is an uncharacterized protein from Dictyostelium discoideum (Social amoeba).